The primary structure comprises 173 residues: dCTP deaminase, dUMP-forming (173 aa).

DCTP is bound by residues 93–98 (RSSIGR), Asp111, 119–121 (TLE), Gln138, and Tyr151. Glu121 functions as the Proton donor/acceptor in the catalytic mechanism.

The protein belongs to the dCTP deaminase family. As to quaternary structure, homotrimer.

It catalyses the reaction dCTP + 2 H2O = dUMP + NH4(+) + diphosphate. Its pathway is pyrimidine metabolism; dUMP biosynthesis; dUMP from dCTP: step 1/1. In terms of biological role, bifunctional enzyme that catalyzes both the deamination of dCTP to dUTP and the hydrolysis of dUTP to dUMP without releasing the toxic dUTP intermediate. This chain is dCTP deaminase, dUMP-forming, found in Cytophaga hutchinsonii (strain ATCC 33406 / DSM 1761 / CIP 103989 / NBRC 15051 / NCIMB 9469 / D465).